The primary structure comprises 637 residues: Threonine--tRNA ligase (637 aa).

Residues 1–61 (MLNITLPDGS…VEDSAVQIIT (61 aa)) form the TGS domain. A catalytic region spans residues 242–533 (DHRKLGKQLD…LIENHAGSFP (292 aa)). Zn(2+) is bound by residues cysteine 333, histidine 384, and histidine 510.

It belongs to the class-II aminoacyl-tRNA synthetase family. As to quaternary structure, homodimer. Zn(2+) serves as cofactor.

It is found in the cytoplasm. The enzyme catalyses tRNA(Thr) + L-threonine + ATP = L-threonyl-tRNA(Thr) + AMP + diphosphate + H(+). Functionally, catalyzes the attachment of threonine to tRNA(Thr) in a two-step reaction: L-threonine is first activated by ATP to form Thr-AMP and then transferred to the acceptor end of tRNA(Thr). Also edits incorrectly charged L-seryl-tRNA(Thr). The protein is Threonine--tRNA ligase of Neisseria meningitidis serogroup A / serotype 4A (strain DSM 15465 / Z2491).